The primary structure comprises 136 residues: Aspartate 1-decarboxylase (136 aa).

Residue serine 25 is the Schiff-base intermediate with substrate; via pyruvic acid of the active site. At serine 25 the chain carries Pyruvic acid (Ser). A substrate-binding site is contributed by threonine 57. The active-site Proton donor is tyrosine 58. 73-75 lines the substrate pocket; that stretch reads GAA.

Belongs to the PanD family. As to quaternary structure, heterooctamer of four alpha and four beta subunits. Pyruvate serves as cofactor. Is synthesized initially as an inactive proenzyme, which is activated by self-cleavage at a specific serine bond to produce a beta-subunit with a hydroxyl group at its C-terminus and an alpha-subunit with a pyruvoyl group at its N-terminus.

Its subcellular location is the cytoplasm. The enzyme catalyses L-aspartate + H(+) = beta-alanine + CO2. The protein operates within cofactor biosynthesis; (R)-pantothenate biosynthesis; beta-alanine from L-aspartate: step 1/1. Catalyzes the pyruvoyl-dependent decarboxylation of aspartate to produce beta-alanine. This Acidothermus cellulolyticus (strain ATCC 43068 / DSM 8971 / 11B) protein is Aspartate 1-decarboxylase.